We begin with the raw amino-acid sequence, 569 residues long: MSIDFRNLNTLWGSILVETLARLGLKIGVVSPGSRSTPLTIALARHPQIEAIPILDERSAAFFALGLAKQLYQPVVLVCTSGTATANFYPAVIEAKESHVPLLILTADRPPELRHAHAGQTIDQVKLYGNYPNWQAEISCPSANIERLRYLRQTIIHAWWRCLDPVPGVVHLNLPFRDPLAPTPDLEINNLEANFDQEAFFSHISRQNIAINHSILQINSLPSKGIIIAGLASPQNPESYCQAIADLARSQQYPILAEALSPLRNYAGLNPHLITTYDLLLRNPALRTQLTPDVVLQIGELPTSKELRTWLEEIDCPRWIIDPHPDNYDPLQGKTGHLRVNIEQLGDLFPDKTDNNREYRQLWQKFDQQARLTIDRLLAAETKLIEGKIPWLLSQYLPPRTPIFISNSMPVRYAEFFNPPSDRQIRPYFNRGANGIDGNLSTAIGIAYKNVPSLLLTGDLALLHDTNGFLIKKYFVGSLTIILINNKGGGIFQMLPIAKFDPPFEEFFATPQNIDFCQLCRTYGIDYHLISDWTDFEQKIAVLPESGIRLLEISCDRAFNTQWFLSNYV.

The protein belongs to the TPP enzyme family. MenD subfamily. Homodimer. The cofactor is Mg(2+). Requires Mn(2+) as cofactor. Thiamine diphosphate is required as a cofactor.

The catalysed reaction is isochorismate + 2-oxoglutarate + H(+) = 5-enolpyruvoyl-6-hydroxy-2-succinyl-cyclohex-3-ene-1-carboxylate + CO2. The protein operates within quinol/quinone metabolism; 1,4-dihydroxy-2-naphthoate biosynthesis; 1,4-dihydroxy-2-naphthoate from chorismate: step 2/7. Its pathway is cofactor biosynthesis; phylloquinone biosynthesis. Catalyzes the thiamine diphosphate-dependent decarboxylation of 2-oxoglutarate and the subsequent addition of the resulting succinic semialdehyde-thiamine pyrophosphate anion to isochorismate to yield 2-succinyl-5-enolpyruvyl-6-hydroxy-3-cyclohexene-1-carboxylate (SEPHCHC). This Microcystis aeruginosa (strain NIES-843 / IAM M-2473) protein is 2-succinyl-5-enolpyruvyl-6-hydroxy-3-cyclohexene-1-carboxylate synthase.